A 1145-amino-acid chain; its full sequence is Trafficking protein particle complex subunit 10 (1145 aa).

Belongs to the TMEM1 family. As to quaternary structure, part of the multisubunit TRAPP (transport protein particle) complex. Interacts with Shal (via C-terminal dendritic targeting motif). In terms of tissue distribution, co-expressed with Shal in the nervous system.

The protein localises to the golgi apparatus. The protein resides in the cis-Golgi network. It localises to the cell projection. Its subcellular location is the dendrite. It is found in the perikaryon. In terms of biological role, may play a role in vesicular transport from endoplasmic reticulum to Golgi. Has a role in one of the several mechanisms underlying dendritic localization of Shal channels. The sequence is that of Trafficking protein particle complex subunit 10 (SIDL) from Drosophila melanogaster (Fruit fly).